The chain runs to 498 residues: Inosine-5'-monophosphate dehydrogenase (498 aa).

CBS domains are found at residues 98–155 (MVVN…EQKI) and 159–216 (MTRE…PHAS). Residues aspartate 253 and 303–305 (GIG) contribute to the NAD(+) site. K(+) is bound by residues glycine 305 and glycine 307. Serine 308 is a binding site for IMP. A K(+)-binding site is contributed by cysteine 310. Cysteine 310 acts as the Thioimidate intermediate in catalysis. IMP contacts are provided by residues 343 to 345 (DGG), 366 to 367 (GS), and 390 to 394 (YRGMG). Catalysis depends on arginine 406, which acts as the Proton acceptor. Glutamate 421 is a binding site for IMP. Positions 475, 476, and 477 each coordinate K(+).

It belongs to the IMPDH/GMPR family. Homotetramer. Requires K(+) as cofactor.

It carries out the reaction IMP + NAD(+) + H2O = XMP + NADH + H(+). The protein operates within purine metabolism; XMP biosynthesis via de novo pathway; XMP from IMP: step 1/1. Mycophenolic acid (MPA) is a non-competitive inhibitor that prevents formation of the closed enzyme conformation by binding to the same site as the amobile flap. In contrast, mizoribine monophosphate (MZP) is a competitive inhibitor that induces the closed conformation. MPA is a potent inhibitor of mammalian IMPDHs but a poor inhibitor of the bacterial enzymes. MZP is a more potent inhibitor of bacterial IMPDH. Functionally, catalyzes the conversion of inosine 5'-phosphate (IMP) to xanthosine 5'-phosphate (XMP), the first committed and rate-limiting step in the de novo synthesis of guanine nucleotides, and therefore plays an important role in the regulation of cell growth. The chain is Inosine-5'-monophosphate dehydrogenase from Rhizobium tropici.